The primary structure comprises 634 residues: TATA box-binding protein-associated factor RNA polymerase I subunit B (634 aa).

The segment at 19 to 51 (LVCEYCGHGSEYAEDDADNGFFTCRQCSAIHTS) adopts an RRN7-type zinc-finger fold. Zn(2+) is bound by residues cysteine 21, cysteine 24, cysteine 42, and cysteine 45. A B-reader region spans residues 51 to 80 (STQNTATNPFDFPMTPAHLSAHRRPTQPTP). The interval 56-117 (ATNPFDFPMT…EPRDFATGAN (62 aa)) is disordered. Positions 77 to 87 (QPTPTPKPFPA) are enriched in pro residues. Residues 81-83 (TPK) form a B-linker region. An N-terminal cyclin fold region spans residues 84–281 (PFPAPRGAAT…DKLLGSSLND (198 aa)). Residues 88–98 (PRGAATGAAAP) are compositionally biased toward low complexity. The segment at 282 to 284 (CPL) is C-terminal cyclin fold.

It belongs to the RRN7/TAF1B family.

It is found in the nucleus. The protein resides in the nucleolus. Component of RNA polymerase I core factor complex that acts as a GTF2B/TFIIB-like factor and plays a key role in multiple steps during transcription initiation such as pre-initiation complex (PIC) assembly and postpolymerase recruitment events in polymerase I (Pol I) transcription. Binds rDNA promoters and plays a role in Pol I recruitment. The chain is TATA box-binding protein-associated factor RNA polymerase I subunit B from Oryza sativa subsp. indica (Rice).